Consider the following 664-residue polypeptide: MSGKPLLVTCGLPYTNGPCHIGHLRTYVPADFYVRYMRRSGEEVVFVCGSDNHGTPIVISAEQEGSTPRVLSERYHEHFYETFRRMDVVFDRFGMTDDAMNHETTRSIVERLIENGYVYAETVSQSYCPDCERFLPDRYVEGICPHCGAVARGDECDQGCGQHLEPGEIKDAICKVCGGKAEYREQEHYFFRLSAFREFLLDYLPALGGTSTARNYALGWVKELLHDWCITRTLDWGVKFPGRDDLVVYVWVDAPIGYISFTKEWAQKAGADWKDYWCGDETGVTHFIGGDIIYHHCIFWPALLKGAGYGLPSAVVASGMVTIEGKKFSKSRGYVVWTNDDYLDQGLPADYLRYYLLSYTNHTKELDFSWKVYGERVNNEIVGTLGNFIYRTMYFAEKEFSGVPDLAPRLEVIEEIERSLAAVDGLMRDYDFKNAVDAMMTLASFGNGYIQNNAPWKLIKEDRAAAEQVIADCLQIVKALVLVFEPLMPDAMQRAWTMLGYGDDIADHAIAEATAPVGARPLAKPSTLFAKVEKDQVAALEATLNERVERANAAAAPKMPVVSIEEFGNLDIRIAKVVSAEPIKGSKKLYKLVVDLGSEKRQVVSGIAQFYAPDELVGKDVALIANLAPAKIFGVESRGMILAAGDEASLLVPLRPVKPGTKIR.

A 'HIGH' region motif is present at residues 13-23 (PYTNGPCHIGH). Residues Cys-144, Cys-147, Cys-156, and Cys-160 each coordinate Zn(2+). Positions 327 to 331 (KFSKS) match the 'KMSKS' region motif. Lys-330 is a binding site for ATP. The region spanning 566-664 (EFGNLDIRIA…RPVKPGTKIR (99 aa)) is the tRNA-binding domain.

Belongs to the class-I aminoacyl-tRNA synthetase family. MetG type 1 subfamily. In terms of assembly, homodimer. Requires Zn(2+) as cofactor.

It is found in the cytoplasm. It catalyses the reaction tRNA(Met) + L-methionine + ATP = L-methionyl-tRNA(Met) + AMP + diphosphate. Its function is as follows. Is required not only for elongation of protein synthesis but also for the initiation of all mRNA translation through initiator tRNA(fMet) aminoacylation. The protein is Methionine--tRNA ligase of Methanoculleus marisnigri (strain ATCC 35101 / DSM 1498 / JR1).